Here is a 473-residue protein sequence, read N- to C-terminus: Cucurbitadienol 11-hydroxylase (473 aa).

The chain crosses the membrane as a helical span at residues 4 to 24; that stretch reads VVLGLATLFVAYYIHWINKWR. Heme is bound at residue Cys422.

Belongs to the cytochrome P450 family. Heme is required as a cofactor. Highly expressed in young fruits 15 days after anthesis (15-DAA). Also observed in roots.

It localises to the membrane. The enzyme catalyses cucurbitadienol + 2 reduced [NADPH--hemoprotein reductase] + 2 O2 = 11-oxocucurbitadienol + 2 oxidized [NADPH--hemoprotein reductase] + 3 H2O + 2 H(+). The catalysed reaction is cucurbitadienol + reduced [NADPH--hemoprotein reductase] + O2 = 11-hydroxycucurbitadienol + oxidized [NADPH--hemoprotein reductase] + H2O + H(+). It carries out the reaction 11-hydroxycucurbitadienol + reduced [NADPH--hemoprotein reductase] + O2 = 11-oxocucurbitadienol + oxidized [NADPH--hemoprotein reductase] + 2 H2O + H(+). It catalyses the reaction (24R)-24,25-dihydroxycucurbitadienol + reduced [NADPH--hemoprotein reductase] + O2 = mogrol + oxidized [NADPH--hemoprotein reductase] + H2O + H(+). It functions in the pathway secondary metabolite biosynthesis; terpenoid biosynthesis. Its function is as follows. Hydroxylase involved in the biosynthesis of cucurbitacin and mogroside tetracyclic triterpene natural products (e.g. siamenoside I and mogrosides IV, V and VI). Cucurbitacins have cytotoxic properties and exhibit deterrent taste as a defense barrier against herbivores. Mogrosides are nonsugar highly oxygenated compounds used as high-intensity zero-calorie sweeteners; they also possess pharmacological properties such as regulating immunity, lowering blood sugar and lipid levels, protecting the liver, and acting as antioxidants and antitumor agents. Catalyzes the oxidation of cucurbitadienol at the C-11 position to produce 11-oxocucurbitadienol, a possible biosynthetic intermediate from cucurbitadienol to mogrol. Also mediates the conversion of 24,25-dihydroxycucurbitadienol to mogrol. The polypeptide is Cucurbitadienol 11-hydroxylase (Siraitia grosvenorii (Monk's fruit)).